Reading from the N-terminus, the 279-residue chain is Succinate dehydrogenase [ubiquinone] iron-sulfur subunit 1, mitochondrial (279 aa).

The transit peptide at 1–28 (MASGLIGRLVGTKPSKLATAARLIPARW) directs the protein to the mitochondrion. In terms of domain architecture, 2Fe-2S ferredoxin-type spans 52–141 (FQIYRWNPDN…ETTITPLPHM (90 aa)). 3 residues coordinate [2Fe-2S] cluster: cysteine 102, cysteine 107, and cysteine 122. The region spanning 184–214 (DRAKLDGMYECILCACCSTSCPSYWWNPESY) is the 4Fe-4S ferredoxin-type domain. The [4Fe-4S] cluster site is built by cysteine 194, cysteine 197, and cysteine 200. A [3Fe-4S] cluster-binding site is contributed by cysteine 204. Tryptophan 209 contributes to the a ubiquinone binding site. [3Fe-4S] cluster-binding residues include cysteine 251 and cysteine 257. Cysteine 261 is a [4Fe-4S] cluster binding site.

This sequence belongs to the succinate dehydrogenase/fumarate reductase iron-sulfur protein family. As to quaternary structure, component of complex II composed of eight subunits in plants: four classical SDH subunits SDH1, SDH2, SDH3 and SDH4 (a flavoprotein (FP), an iron-sulfur protein (IP), and a cytochrome b composed of a large and a small subunit.), as well as four subunits unknown in mitochondria from bacteria and heterotrophic eukaryotes. Requires [2Fe-2S] cluster as cofactor. [3Fe-4S] cluster is required as a cofactor. [4Fe-4S] cluster serves as cofactor. Ubiquitous. Preferentially expressed in flowers and inflorescences.

It localises to the mitochondrion inner membrane. It catalyses the reaction a quinone + succinate = fumarate + a quinol. It participates in carbohydrate metabolism; tricarboxylic acid cycle; fumarate from succinate (eukaryal route): step 1/1. In terms of biological role, iron-sulfur protein (IP) subunit of succinate dehydrogenase (SDH) that is involved in complex II of the mitochondrial electron transport chain and is responsible for transferring electrons from succinate to ubiquinone (coenzyme Q). In Arabidopsis thaliana (Mouse-ear cress), this protein is Succinate dehydrogenase [ubiquinone] iron-sulfur subunit 1, mitochondrial (SDH2-1).